Here is a 216-residue protein sequence, read N- to C-terminus: Orotidine 5'-phosphate decarboxylase (216 aa).

Residues Asp-12, Lys-34, 62-71 (DFKVADIDAT), Ser-119, 172-182 (PGVGFQGGNAK), Gly-194, and Arg-195 contribute to the substrate site. Lys-64 functions as the Proton donor in the catalytic mechanism.

It belongs to the OMP decarboxylase family. Type 1 subfamily. In terms of assembly, homodimer.

The enzyme catalyses orotidine 5'-phosphate + H(+) = UMP + CO2. Its pathway is pyrimidine metabolism; UMP biosynthesis via de novo pathway; UMP from orotate: step 2/2. Functionally, catalyzes the decarboxylation of orotidine 5'-monophosphate (OMP) to uridine 5'-monophosphate (UMP). This chain is Orotidine 5'-phosphate decarboxylase, found in Methanosphaera stadtmanae (strain ATCC 43021 / DSM 3091 / JCM 11832 / MCB-3).